We begin with the raw amino-acid sequence, 451 residues long: 23S rRNA (uracil(1939)-C(5))-methyltransferase RlmD (451 aa).

Residues 1 to 21 (MAKHERGLRFQPTGGVKSVQI) are disordered. The TRAM domain maps to 20 to 78 (QIPAGKKQRLSIERLSDDGRGIAFLEGKTWFVAGSLAGEEVEARVLNARGKVVEARTER). Cysteine 91, cysteine 97, cysteine 100, and cysteine 179 together coordinate [4Fe-4S] cluster. S-adenosyl-L-methionine-binding residues include glutamine 283, phenylalanine 312, asparagine 317, glutamate 333, aspartate 360, and aspartate 381. Catalysis depends on cysteine 407, which acts as the Nucleophile.

This sequence belongs to the class I-like SAM-binding methyltransferase superfamily. RNA M5U methyltransferase family. RlmD subfamily.

It catalyses the reaction uridine(1939) in 23S rRNA + S-adenosyl-L-methionine = 5-methyluridine(1939) in 23S rRNA + S-adenosyl-L-homocysteine + H(+). In terms of biological role, catalyzes the formation of 5-methyl-uridine at position 1939 (m5U1939) in 23S rRNA. This Pseudomonas syringae pv. tomato (strain ATCC BAA-871 / DC3000) protein is 23S rRNA (uracil(1939)-C(5))-methyltransferase RlmD.